We begin with the raw amino-acid sequence, 219 residues long: UPF0173 metal-dependent hydrolase Mhun_1705 (219 aa).

The protein belongs to the UPF0173 family.

This is UPF0173 metal-dependent hydrolase Mhun_1705 from Methanospirillum hungatei JF-1 (strain ATCC 27890 / DSM 864 / NBRC 100397 / JF-1).